The following is a 523-amino-acid chain: Sugar carrier protein C (523 aa).

Residues 1–25 are Cytoplasmic-facing; sequence MPAVGGIPPSGGNRKVYPGNLTLYV. 12 consecutive transmembrane segments (helical) span residues 26-46, 86-106, 120-140, 143-163, 172-192, 205-225, 298-320, 327-347, 351-371, 387-407, 433-453, and 456-476; these read TVTC…IGIS, MFTS…STIT, VLFC…MLIL, ILLG…LSEM, LNIG…VLNY, LSLG…LVLP, LTGI…FGSD, VITG…VDKW, FLFL…AACI, WYAV…AWSW, SVNM…LCHL, and GLFI…YYFL. Over 477–523 the chain is Cytoplasmic; that stretch reads PETKGIPIEEMGQVWKQHWYWSRYVVDEDYPNGGLEMGKEGRIPKNV.

The protein belongs to the major facilitator superfamily. Sugar transporter (TC 2.A.1.1) family.

It localises to the membrane. This chain is Sugar carrier protein C (STC), found in Ricinus communis (Castor bean).